A 447-amino-acid polypeptide reads, in one-letter code: Tubulin beta chain (447 aa).

Positions 11, 69, 138, 142, 143, 144, 204, and 226 each coordinate GTP. A Mg(2+)-binding site is contributed by Glu-69.

This sequence belongs to the tubulin family. Dimer of alpha and beta chains. A typical microtubule is a hollow water-filled tube with an outer diameter of 25 nm and an inner diameter of 15 nM. Alpha-beta heterodimers associate head-to-tail to form protofilaments running lengthwise along the microtubule wall with the beta-tubulin subunit facing the microtubule plus end conferring a structural polarity. Microtubules usually have 13 protofilaments but different protofilament numbers can be found in some organisms and specialized cells. Mg(2+) is required as a cofactor.

The protein localises to the cytoplasm. Its subcellular location is the cytoskeleton. In terms of biological role, tubulin is the major constituent of microtubules, a cylinder consisting of laterally associated linear protofilaments composed of alpha- and beta-tubulin heterodimers. Microtubules grow by the addition of GTP-tubulin dimers to the microtubule end, where a stabilizing cap forms. Below the cap, tubulin dimers are in GDP-bound state, owing to GTPase activity of alpha-tubulin. The sequence is that of Tubulin beta chain (TUB2) from Penicillium digitatum (Green mold).